The following is a 758-amino-acid chain: 5-methyltetrahydropteroyltriglutamate--homocysteine methyltransferase (758 aa).

5-methyltetrahydropteroyltri-L-glutamate is bound by residues 17–20 (RELK) and K114. L-homocysteine is bound by residues 429–431 (IGS) and E482. L-methionine contacts are provided by residues 429–431 (IGS) and E482. Residues 513 to 514 (RC) and W559 contribute to the 5-methyltetrahydropteroyltri-L-glutamate site. D597 is a binding site for L-homocysteine. Position 597 (D597) interacts with L-methionine. E603 is a binding site for 5-methyltetrahydropteroyltri-L-glutamate. Zn(2+)-binding residues include H639, C641, and E663. The active-site Proton donor is the H692. C724 contacts Zn(2+).

This sequence belongs to the vitamin-B12 independent methionine synthase family. The cofactor is Zn(2+).

The enzyme catalyses 5-methyltetrahydropteroyltri-L-glutamate + L-homocysteine = tetrahydropteroyltri-L-glutamate + L-methionine. The protein operates within amino-acid biosynthesis; L-methionine biosynthesis via de novo pathway; L-methionine from L-homocysteine (MetE route): step 1/1. Its function is as follows. Catalyzes the transfer of a methyl group from 5-methyltetrahydrofolate to homocysteine resulting in methionine formation. In Buchnera aphidicola subsp. Acyrthosiphon pisum (strain APS) (Acyrthosiphon pisum symbiotic bacterium), this protein is 5-methyltetrahydropteroyltriglutamate--homocysteine methyltransferase.